We begin with the raw amino-acid sequence, 282 residues long: D-alanine aminotransferase (282 aa).

Residue tyrosine 32 participates in substrate binding. Residue arginine 51 participates in pyridoxal 5'-phosphate binding. 2 residues coordinate substrate: arginine 99 and histidine 101. Lysine 146 acts as the Proton acceptor in catalysis. Lysine 146 bears the N6-(pyridoxal phosphate)lysine mark. A pyridoxal 5'-phosphate-binding site is contributed by glutamate 178.

The protein belongs to the class-IV pyridoxal-phosphate-dependent aminotransferase family. In terms of assembly, homodimer. It depends on pyridoxal 5'-phosphate as a cofactor.

It catalyses the reaction D-alanine + 2-oxoglutarate = D-glutamate + pyruvate. In terms of biological role, acts on the D-isomers of alanine, leucine, aspartate, glutamate, aminobutyrate, norvaline and asparagine. The enzyme transfers an amino group from a substrate D-amino acid to the pyridoxal phosphate cofactor to form pyridoxamine and an alpha-keto acid in the first half-reaction. The second half-reaction is the reverse of the first, transferring the amino group from the pyridoxamine to a second alpha-keto acid to form the product D-amino acid via a ping-pong mechanism. This is an important process in the formation of D-alanine and D-glutamate, which are essential bacterial cell wall components. This chain is D-alanine aminotransferase (dat), found in Staphylococcus aureus (strain COL).